The following is a 132-amino-acid chain: Fatty acid-binding protein, brain (132 aa).

Position 2 is an N-acetylvaline (Val-2). Residue 127 to 129 (RHY) participates in a fatty acid binding.

This sequence belongs to the calycin superfamily. Fatty-acid binding protein (FABP) family. As to expression, expressed in brain and other neural tissues.

It localises to the cytoplasm. Its function is as follows. B-FABP could be involved in the transport of a so far unknown hydrophobic ligand with potential morphogenic activity during CNS development. It is required for the establishment of the radial glial fiber system in developing brain, a system that is necessary for the migration of immature neurons to establish cortical layers. The polypeptide is Fatty acid-binding protein, brain (FABP7) (Homo sapiens (Human)).